The sequence spans 517 residues: Crotonobetaine/carnitine--CoA ligase (517 aa).

This sequence belongs to the ATP-dependent AMP-binding enzyme family.

It carries out the reaction 4-(trimethylamino)butanoate + ATP + CoA = 4-(trimethylamino)butanoyl-CoA + AMP + diphosphate. The enzyme catalyses crotonobetaine + ATP + CoA = crotonobetainyl-CoA + AMP + diphosphate. The catalysed reaction is (R)-carnitine + ATP + CoA = (R)-carnitinyl-CoA + AMP + diphosphate. It participates in amine and polyamine metabolism; carnitine metabolism. Its function is as follows. Catalyzes the transfer of CoA to carnitine, generating the initial carnitinyl-CoA needed for the CaiB reaction cycle. Also has activity toward crotonobetaine and gamma-butyrobetaine. This is Crotonobetaine/carnitine--CoA ligase from Escherichia coli O8 (strain IAI1).